The chain runs to 159 residues: Ribonuclease H (159 aa).

The RNase H type-1 domain maps to 8-150 (NLKEITMYTD…CDQLAVAAAK (143 aa)). Residues aspartate 17, glutamate 55, aspartate 77, and aspartate 142 each coordinate Mg(2+).

The protein belongs to the RNase H family. Monomer. Requires Mg(2+) as cofactor.

It is found in the cytoplasm. The catalysed reaction is Endonucleolytic cleavage to 5'-phosphomonoester.. In terms of biological role, endonuclease that specifically degrades the RNA of RNA-DNA hybrids. The protein is Ribonuclease H of Desulforamulus reducens (strain ATCC BAA-1160 / DSM 100696 / MI-1) (Desulfotomaculum reducens).